A 501-amino-acid chain; its full sequence is Capsid protein (501 aa).

The tract at residues 78-98 (SEEGFPVEPKTEEKDIPSTSG) is disordered. The Nuclear localization signal signature appears at 122–125 (KRGF). A CCHC-type zinc finger spans residues 431-448 (CKCWICHEEGHYANECPK).

This sequence belongs to the caulimoviridae capsid protein family. Interacts (via nuclear localization signal) with host importin alpha.

It localises to the virion. Its subcellular location is the host nucleus. Functionally, self assembles to form an icosahedral capsid, about 50 nm in diameter, nm, composed of 420 subunits of the viral capsid protein. The capsid encapsulates the genomic dsDNA. Following virus entry into host cell, provides nuclear import of the viral genome. Virus particles do not enter the nucleus, but dock at the nuclear membrane through the interaction with host importins. The protein is Capsid protein of Cestrum parqui (CmYLCV).